Here is a 92-residue protein sequence, read N- to C-terminus: UPF0223 protein SPCG_1392 (92 aa).

The protein belongs to the UPF0223 family.

In Streptococcus pneumoniae (strain CGSP14), this protein is UPF0223 protein SPCG_1392.